Consider the following 579-residue polypeptide: Probable methyl-accepting chemotaxis protein BT9727_0355 (579 aa).

Residues 1-13 lie on the Cytoplasmic side of the membrane; that stretch reads MKKYWHKLSFLQK. Residues 14–34 form a helical membrane-spanning segment; the sequence is NVLLTVLVILTLVGTMGALSF. Residues 35-198 are Extracellular-facing; the sequence is NMFQNSMMSI…ASIVPSTKEK (164 aa). A helical membrane pass occupies residues 199-219; the sequence is FIIQGLMFICISVLIATVIQF. Residues 220–579 lie on the Cytoplasmic side of the membrane; sequence LIVRNALAPL…LQELIGEFKS (360 aa). In terms of domain architecture, HAMP spans 223–274; it reads RNALAPLRDLREGLRRVGEGDLNIKLEERSDDIGIINSYFNNTIEKFKGIID. Residue Glu-289 is modified to Glutamate methyl ester (Glu). The 237-residue stretch at 293–529 folds into the Methyl-accepting transducer domain; sequence STKENSMAVQ…NIVRVVNELS (237 aa). At Glu-548 the chain carries Glutamate methyl ester (Glu).

The protein belongs to the methyl-accepting chemotaxis (MCP) protein family.

The protein localises to the cell membrane. Its function is as follows. Chemotactic-signal transducers respond to changes in the concentration of attractants and repellents in the environment, transduce a signal from the outside to the inside of the cell, and facilitate sensory adaptation through the variation of the level of methylation. This chain is Probable methyl-accepting chemotaxis protein BT9727_0355, found in Bacillus thuringiensis subsp. konkukian (strain 97-27).